We begin with the raw amino-acid sequence, 94 residues long: MNIYDILKKPLVTEKTTLEKDAKNVISFEVDRSANKIEIKNAVEKLFKVEVSEVNTVNVAGKLKRVGRHYGKRSNWKKAYVTLKEGNNVDFFEI.

This sequence belongs to the universal ribosomal protein uL23 family. In terms of assembly, part of the 50S ribosomal subunit. Contacts protein L29, and trigger factor when it is bound to the ribosome.

Its function is as follows. One of the early assembly proteins it binds 23S rRNA. One of the proteins that surrounds the polypeptide exit tunnel on the outside of the ribosome. Forms the main docking site for trigger factor binding to the ribosome. The chain is Large ribosomal subunit protein uL23 from Geobacter metallireducens (strain ATCC 53774 / DSM 7210 / GS-15).